The sequence spans 97 residues: MMNKLSEEEIQDKLKKFDGWTYAKKSIHTSFQFENFKEAFTVMTRIAFEAEAQQHHPNWGNVFNELEISLSTHDADGVTEKDFKLARAIEDIVESTN.

It belongs to the pterin-4-alpha-carbinolamine dehydratase family.

The catalysed reaction is (4aS,6R)-4a-hydroxy-L-erythro-5,6,7,8-tetrahydrobiopterin = (6R)-L-erythro-6,7-dihydrobiopterin + H2O. This Christiangramia forsetii (strain DSM 17595 / CGMCC 1.15422 / KT0803) (Gramella forsetii) protein is Putative pterin-4-alpha-carbinolamine dehydratase.